The primary structure comprises 261 residues: Thiamine thiazole synthase (261 aa).

Residues alanine 33, 52-53 (ER), glycine 60, valine 124, and 152-154 (HVD) contribute to the NAD(+) site. 2 residues coordinate Fe cation: aspartate 154 and histidine 169. Methionine 219 lines the NAD(+) pocket. Position 229 (arginine 229) interacts with glycine.

This sequence belongs to the THI4 family. Homooctamer; tetramer of dimers. Requires Fe(2+) as cofactor.

The catalysed reaction is hydrogen sulfide + glycine + NAD(+) = ADP-5-ethyl-4-methylthiazole-2-carboxylate + nicotinamide + 3 H2O + H(+). The protein operates within cofactor biosynthesis; thiamine diphosphate biosynthesis. Functionally, involved in the biosynthesis of the thiazole moiety of thiamine. Catalyzes the conversion of NAD and glycine to adenosine diphosphate 5-(2-hydroxyethyl)-4-methylthiazole-2-carboxylate (ADT), an adenylated thiazole intermediate, using free sulfide as a source of sulfur. In Pyrobaculum islandicum (strain DSM 4184 / JCM 9189 / GEO3), this protein is Thiamine thiazole synthase.